Here is a 1018-residue protein sequence, read N- to C-terminus: Unconventional myosin-Ig (1018 aa).

Met1 is subject to N-acetylmethionine. Residues 9–707 (YGKPDFVLLD…TLVTLEQSRA (699 aa)) enclose the Myosin motor domain. 102-109 (GESGAGKT) lines the ATP pocket. Residues 584-606 (MVALVENLASKEPFYVRCIKPNE) are actin-binding. The 30-residue stretch at 710-739 (IPIIVLLLQKAWRGTLARWRCRRLRAIYTI) folds into the IQ domain. The region spanning 824 to 1017 (GLRQDWGCRR…RGSFTLLWPS (194 aa)) is the TH1 domain.

The protein belongs to the TRAFAC class myosin-kinesin ATPase superfamily. Myosin family. Interacts with calmodulin; via its IQ motifs. As to expression, specifically expressed in hematopoietic cells.

It is found in the cell membrane. It localises to the cell projection. The protein resides in the phagocytic cup. Unconventional myosin required during immune response for detection of rare antigen-presenting cells by regulating T-cell migration. Unconventional myosins are actin-based motor molecules with ATPase activity and serve in intracellular movements. Acts as a regulator of T-cell migration by generating membrane tension, enforcing cell-intrinsic meandering search, thereby enhancing detection of rare antigens during lymph-node surveillance, enabling pathogen eradication. Also required in B-cells, where it regulates different membrane/cytoskeleton-dependent processes. Involved in Fc-gamma receptor (Fc-gamma-R) phagocytosis. Its function is as follows. Constitutes the minor histocompatibility antigen HA-2. More generally, minor histocompatibility antigens (mHags) refer to immunogenic peptide which, when complexed with MHC, can generate an immune response after recognition by specific T-cells. The peptides are derived from polymorphic intracellular proteins, which are cleaved by normal pathways of antigen processing. The binding of these peptides to MHC class I or class II molecules and their expression on the cell surface can stimulate T-cell responses and thereby trigger graft rejection or graft-versus-host disease (GVHD) after hematopoietic stem cell transplantation from HLA-identical sibling donor. GVHD is a frequent complication after bone marrow transplantation (BMT), due to mismatch of minor histocompatibility antigen in HLA-matched sibling marrow transplants. HA-2 is restricted to MHC class I HLA-A*0201. The chain is Unconventional myosin-Ig (MYO1G) from Homo sapiens (Human).